A 153-amino-acid chain; its full sequence is Pheromone-binding protein Gp-9 (153 aa).

The first 19 residues, 1–19, serve as a signal peptide directing secretion; the sequence is MKTFVLHIFIFALVAFASA. 3 disulfide bridges follow: C37–C77, C73–C129, and C118–C138.

It belongs to the PBP/GOBP family. In terms of assembly, homodimer.

It is found in the secreted. Functionally, colony queen number, a major feature of social organization, is associated with worker genotype for Gp-9. Colonies are headed by either a single reproductive queen (monogyne form) or multiple queens (polygyne form). Differences in worker Gp-9 genotypes between social forms may cause differences in workers' abilities to recognize queens and regulate their numbers. In Solenopsis electra (Fire ant), this protein is Pheromone-binding protein Gp-9.